Reading from the N-terminus, the 570-residue chain is Phytoene desaturase (570 aa).

The helical transmembrane segment at 547 to 567 (LFQGFLGALVAILLAYYYLVI) threads the bilayer.

It belongs to the carotenoid/retinoid oxidoreductase family. The cofactor is NAD(+).

The protein resides in the membrane. The enzyme catalyses 15-cis-phytoene + A = all-trans-phytofluene + AH2. It carries out the reaction all-trans-phytofluene + A = all-trans-zeta-carotene + AH2. The catalysed reaction is all-trans-zeta-carotene + A = all-trans-neurosporene + AH2. It catalyses the reaction all-trans-neurosporene + A = all-trans-lycopene + AH2. The protein operates within carotenoid biosynthesis. In terms of biological role, phytoene desaturase; part of the car gene cluster that mediates the biosynthesis of neurosporaxanthin, a carboxylic apocarotenoid acting as an essential protective pigments and leading to orange pigmentation. Converts phytoene into lycopene via the intermediates phytofluene, zeta-carotene and neurosporene; and further desaturates gamma-carotene into torulene. Neurosporaxanthin is synthesized from geranyl-geranyl pyrophosphate (GGPP) through several enzymatic activities. Phytoene synthase activity performed by the bifunctional enzyme carAR first produces phytoene from geranyl-geranyl pyrophosphate (GGPP). The phytoene dehydrogenase carB then introduces 4 desaturations to lead to lycopene which is substrate of the carotene cyclase activity of carAR that leads to the production of gamma-carotene. CarB then performs a 5th desaturation reaction to yield torulene. Torulene is the substrate of the dioxidase carT that breaks the molecule, removing five carbon atoms to yield beta-apo-4'-carotenal, whereas the aldehyde dehydrogenase carD mediates the last step by converting beta-apo-4'-carotenal into neurosporaxanthin. The protein is Phytoene desaturase of Fusarium fujikuroi (Bakanae and foot rot disease fungus).